A 335-amino-acid polypeptide reads, in one-letter code: Olfactory receptor 9K2 (335 aa).

Topologically, residues 1 to 50 are extracellular; it reads MLGSKPRVHLYILPCASQQVSTMGDRGTSNHSEMTDFILAGFRVRPELHI. An N-linked (GlcNAc...) asparagine glycan is attached at Asn-30. A helical membrane pass occupies residues 51-71; sequence LLFLLFLFVYAMILLGNVGMM. Residues 72-79 are Cytoplasmic-facing; sequence TIIMTDPR. Residues 80-100 traverse the membrane as a helical segment; the sequence is LNTPMYFFLGNLSFIDLFYSS. The Extracellular segment spans residues 101-124; sequence VIEPKAMINFWSENKSISFAGCVA. N-linked (GlcNAc...) asparagine glycosylation occurs at Asn-114. Cysteines 122 and 214 form a disulfide. Residues 125 to 145 traverse the membrane as a helical segment; it reads QLFLFALLIVTEGFLLAAMAY. The Cytoplasmic portion of the chain corresponds to 146–164; sequence DRFIAICNPLLYSVQMSTR. A helical transmembrane segment spans residues 165–185; that stretch reads LCTQLVAGSYFCGCISSVIQT. Residues 186–222 are Extracellular-facing; sequence SMTFTLSFCASRAVDHFYCDSRPLQRLSCSDLFIHRM. Residues 223 to 242 form a helical membrane-spanning segment; it reads ISFSLSCIIILPTIIVIIVS. The Cytoplasmic portion of the chain corresponds to 243–262; sequence YMYIVSTVLKIHSTEGHKKA. The helical transmembrane segment at 263-283 threads the bilayer; sequence FSTCSSHLGVVSVLYGAVFFM. Residues 284–296 are Extracellular-facing; that stretch reads YLTPDRFPELSKV. Over 316-335 the chain is Cytoplasmic; sequence RNKDVQEALKKFLEKKNIIL.

The protein belongs to the G-protein coupled receptor 1 family.

The protein resides in the cell membrane. Odorant receptor. The polypeptide is Olfactory receptor 9K2 (OR9K2) (Homo sapiens (Human)).